The sequence spans 796 residues: Protocadherin beta-3 (796 aa).

The N-terminal stretch at 1–26 is a signal peptide; the sequence is MEAGGERFLRQRQVLLLFVFLGGSLA. Over 27-690 the chain is Extracellular; the sequence is GSESRRYSVA…AQADLLTVYL (664 aa). 5 consecutive Cadherin domains span residues 35–133, 138–242, 247–347, 352–451, and 456–561; these read VAEE…SPVF, MHLK…APEF, YEVA…PPEL, VNSP…APAF, and YTLF…SPFV. Asn169 carries an N-linked (GlcNAc...) asparagine glycan. Residues Asn418 and Asn436 are each glycosylated (N-linked (GlcNAc...) asparagine). A glycan (N-linked (GlcNAc...) asparagine) is linked at Asn567. The Cadherin 6 domain occupies 568-671; that stretch reads GSAPCTELVP…LVDGFSQPYL (104 aa). A helical membrane pass occupies residues 691 to 711; sequence VVALASVSSLFLFSVLLFVAV. Residues 712–796 are Cytoplasmic-facing; it reads RLCRRSRAAS…PSFRKSFEFS (85 aa).

Its subcellular location is the cell membrane. Its function is as follows. Potential calcium-dependent cell-adhesion protein. May be involved in the establishment and maintenance of specific neuronal connections in the brain. The protein is Protocadherin beta-3 (PCDHB3) of Pan troglodytes (Chimpanzee).